The primary structure comprises 41 residues: Large ribosomal subunit protein bL36 (41 aa).

The protein belongs to the bacterial ribosomal protein bL36 family.

In Rhodopseudomonas palustris (strain BisA53), this protein is Large ribosomal subunit protein bL36.